A 286-amino-acid chain; its full sequence is Bifunctional protein FolD (286 aa).

NADP(+) contacts are provided by residues 166–168 (GAS) and I232.

It belongs to the tetrahydrofolate dehydrogenase/cyclohydrolase family. In terms of assembly, homodimer.

It carries out the reaction (6R)-5,10-methylene-5,6,7,8-tetrahydrofolate + NADP(+) = (6R)-5,10-methenyltetrahydrofolate + NADPH. The enzyme catalyses (6R)-5,10-methenyltetrahydrofolate + H2O = (6R)-10-formyltetrahydrofolate + H(+). The protein operates within one-carbon metabolism; tetrahydrofolate interconversion. Functionally, catalyzes the oxidation of 5,10-methylenetetrahydrofolate to 5,10-methenyltetrahydrofolate and then the hydrolysis of 5,10-methenyltetrahydrofolate to 10-formyltetrahydrofolate. This Shewanella denitrificans (strain OS217 / ATCC BAA-1090 / DSM 15013) protein is Bifunctional protein FolD.